Reading from the N-terminus, the 299-residue chain is GTPase Era (299 aa).

In terms of domain architecture, Era-type G spans 4–171; that stretch reads KSGFVAILGR…MEILKENLDE (168 aa). The segment at 12–19 is G1; the sequence is GRPNVGKS. 12–19 lines the GTP pocket; that stretch reads GRPNVGKS. Residues 38–42 are G2; that stretch reads QTTRN. The segment at 59-62 is G3; the sequence is DTPG. GTP contacts are provided by residues 59–63 and 121–124; these read DTPGI and NKID. The segment at 121–124 is G4; it reads NKID. The interval 150 to 152 is G5; sequence ISA. The KH type-2 domain occupies 202–280; that stretch reads TREEIPHSVA…FLETWVKVKK (79 aa).

Belongs to the TRAFAC class TrmE-Era-EngA-EngB-Septin-like GTPase superfamily. Era GTPase family. Monomer.

The protein resides in the cytoplasm. It is found in the cell membrane. In terms of biological role, an essential GTPase that binds both GDP and GTP, with rapid nucleotide exchange. Plays a role in 16S rRNA processing and 30S ribosomal subunit biogenesis and possibly also in cell cycle regulation and energy metabolism. This Streptococcus suis (strain 98HAH33) protein is GTPase Era.